The sequence spans 489 residues: MVVFKSTLKLSLFALSLSMMMSGCVLVGLSKNDQSKSLYGINLSHLSLAERKELEEAIYADQQRLTEEKQTLLNMTLTHEIGDHKLQFKPLLARLYASRKYAPLWTDNAAARQLLRDYAAMVASGISKSSATSLETLALVEQQGGLVYDVLLSDILLDYLYYTQNVRSQASNWLYSSAQYQAQQPENDHIQRWLSAVENNQLLDFIQSLAGENHLYRQTIQSLPMFIPTSKESNITQKLAMNAQRLRVIPDFHNGIFVNIPSYKLQYYRDGDLILESRVIVGTNSRRTPVMYSKLSNVVVNPPWNAPIRLINEDLLPKMKADPNYITEHNYSILDNQGNVVDPASIDWESIDNKFPYRVRQAAGDSALGNYKFNMPSSDAIYLHDTPNRGLFNRKNRALSSGCVRVEKSDQLASILLKEAGWTETRKNTVLASKKTTSAPIRSDNPVFLYYVTAWIENGNIVNLPDIYGYDRQINLAEINWDLVKKYLQ.

Residues 10–29 form a helical membrane-spanning segment; it reads LSLFALSLSMMMSGCVLVGL. The L,D-TPase catalytic domain occupies 254–433; that stretch reads NGIFVNIPSY…ETRKNTVLAS (180 aa). Histidine 384 acts as the Proton donor/acceptor in catalysis. Cysteine 403 (nucleophile) is an active-site residue.

This sequence belongs to the YkuD family.

It localises to the membrane. Its pathway is cell wall biogenesis; peptidoglycan biosynthesis. The chain is Putative L,D-transpeptidase HI_1667 from Haemophilus influenzae (strain ATCC 51907 / DSM 11121 / KW20 / Rd).